A 262-amino-acid polypeptide reads, in one-letter code: Ubiquinone biosynthesis protein COQ4, mitochondrial (262 aa).

Zn(2+)-binding residues include His154, Asp155, His158, and Glu170. Positions 243 to 262 (LGIEQPPDLRQMKKDMAKKK) are disordered. A compositionally biased stretch (basic and acidic residues) spans 252–262 (RQMKKDMAKKK).

The protein belongs to the COQ4 family. Component of a multi-subunit COQ enzyme complex, composed of at least COQ3, COQ4, COQ5, COQ6, COQ7 and COQ9. Zn(2+) serves as cofactor.

It localises to the mitochondrion inner membrane. The catalysed reaction is a 4-hydroxy-3-methoxy-5-(all-trans-polyprenyl)benzoate + H(+) = a 2-methoxy-6-(all-trans-polyprenyl)phenol + CO2. It functions in the pathway cofactor biosynthesis; ubiquinone biosynthesis. Functionally, lyase that catalyzes the C1-decarboxylation of 4-hydroxy-3-methoxy-5-(all-trans-polyprenyl)benzoic acid into 2-methoxy-6-(all-trans-polyprenyl)phenol during ubiquinone biosynthesis. This Yarrowia lipolytica (strain CLIB 122 / E 150) (Yeast) protein is Ubiquinone biosynthesis protein COQ4, mitochondrial.